The primary structure comprises 270 residues: Phosphatidylglycerol--prolipoprotein diacylglyceryl transferase (270 aa).

Helical transmembrane passes span 18 to 38 (ITIY…LWLA), 55 to 75 (LVLF…VLFE), 90 to 110 (WQGG…GAVF), and 115 to 135 (GLSF…GQAI). Arginine 137 contributes to the a 1,2-diacyl-sn-glycero-3-phospho-(1'-sn-glycerol) binding site. Transmembrane regions (helical) follow at residues 177 to 197 (HPTF…LLWL), 205 to 225 (GELF…IEGM), and 236 to 256 (LRAA…LWIV).

It belongs to the Lgt family.

The protein localises to the cell membrane. The catalysed reaction is L-cysteinyl-[prolipoprotein] + a 1,2-diacyl-sn-glycero-3-phospho-(1'-sn-glycerol) = an S-1,2-diacyl-sn-glyceryl-L-cysteinyl-[prolipoprotein] + sn-glycerol 1-phosphate + H(+). It participates in protein modification; lipoprotein biosynthesis (diacylglyceryl transfer). Catalyzes the transfer of the diacylglyceryl group from phosphatidylglycerol to the sulfhydryl group of the N-terminal cysteine of a prolipoprotein, the first step in the formation of mature lipoproteins. This Geobacillus kaustophilus (strain HTA426) protein is Phosphatidylglycerol--prolipoprotein diacylglyceryl transferase.